Here is a 458-residue protein sequence, read N- to C-terminus: UDP-N-acetylmuramoylalanine--D-glutamate ligase (458 aa).

124–130 (GSDGKTT) contributes to the ATP binding site.

This sequence belongs to the MurCDEF family.

It localises to the cytoplasm. It carries out the reaction UDP-N-acetyl-alpha-D-muramoyl-L-alanine + D-glutamate + ATP = UDP-N-acetyl-alpha-D-muramoyl-L-alanyl-D-glutamate + ADP + phosphate + H(+). Its pathway is cell wall biogenesis; peptidoglycan biosynthesis. Its function is as follows. Cell wall formation. Catalyzes the addition of glutamate to the nucleotide precursor UDP-N-acetylmuramoyl-L-alanine (UMA). The chain is UDP-N-acetylmuramoylalanine--D-glutamate ligase from Clostridium botulinum (strain Alaska E43 / Type E3).